A 378-amino-acid polypeptide reads, in one-letter code: Putative glutamate--cysteine ligase 2-1 (378 aa).

This sequence belongs to the glutamate--cysteine ligase type 2 family. YbdK subfamily.

It carries out the reaction L-cysteine + L-glutamate + ATP = gamma-L-glutamyl-L-cysteine + ADP + phosphate + H(+). ATP-dependent carboxylate-amine ligase which exhibits weak glutamate--cysteine ligase activity. The chain is Putative glutamate--cysteine ligase 2-1 from Corynebacterium efficiens (strain DSM 44549 / YS-314 / AJ 12310 / JCM 11189 / NBRC 100395).